A 95-amino-acid chain; its full sequence is Aspartyl/glutamyl-tRNA(Asn/Gln) amidotransferase subunit C (95 aa).

This sequence belongs to the GatC family. As to quaternary structure, heterotrimer of A, B and C subunits.

It carries out the reaction L-glutamyl-tRNA(Gln) + L-glutamine + ATP + H2O = L-glutaminyl-tRNA(Gln) + L-glutamate + ADP + phosphate + H(+). It catalyses the reaction L-aspartyl-tRNA(Asn) + L-glutamine + ATP + H2O = L-asparaginyl-tRNA(Asn) + L-glutamate + ADP + phosphate + 2 H(+). Functionally, allows the formation of correctly charged Asn-tRNA(Asn) or Gln-tRNA(Gln) through the transamidation of misacylated Asp-tRNA(Asn) or Glu-tRNA(Gln) in organisms which lack either or both of asparaginyl-tRNA or glutaminyl-tRNA synthetases. The reaction takes place in the presence of glutamine and ATP through an activated phospho-Asp-tRNA(Asn) or phospho-Glu-tRNA(Gln). The sequence is that of Aspartyl/glutamyl-tRNA(Asn/Gln) amidotransferase subunit C from Bartonella henselae (strain ATCC 49882 / DSM 28221 / CCUG 30454 / Houston 1) (Rochalimaea henselae).